The primary structure comprises 289 residues: 2-hydroxy-6-oxononadienedioate/2-hydroxy-6-oxononatrienedioate hydrolase (289 aa).

H269 acts as the Proton acceptor in catalysis.

Belongs to the AB hydrolase superfamily. MhpC family. In terms of assembly, homodimer.

The catalysed reaction is (2Z,4E)-2-hydroxy-6-oxonona-2,4-dienedioate + H2O = (2Z)-2-hydroxypenta-2,4-dienoate + succinate + H(+). The enzyme catalyses (2Z,4E,7E)-2-hydroxy-6-oxonona-2,4,7-trienedioate + H2O = (2Z)-2-hydroxypenta-2,4-dienoate + fumarate + H(+). It participates in aromatic compound metabolism; 3-phenylpropanoate degradation. Functionally, catalyzes the cleavage of the C5-C6 bond of 2-hydroxy-6-oxononadienedioate and 2-hydroxy-6-oxononatrienedioate, a dienol ring fission product of the bacterial meta-cleavage pathway for degradation of phenylpropionic acid. The polypeptide is 2-hydroxy-6-oxononadienedioate/2-hydroxy-6-oxononatrienedioate hydrolase (Cupriavidus pinatubonensis (strain JMP 134 / LMG 1197) (Cupriavidus necator (strain JMP 134))).